We begin with the raw amino-acid sequence, 623 residues long: tRNA uridine 5-carboxymethylaminomethyl modification enzyme MnmG (623 aa).

An FAD-binding site is contributed by 10-15 (GGGHAG). 269-283 (GPRYCPSIEDKIVRF) provides a ligand contact to NAD(+).

Belongs to the MnmG family. In terms of assembly, homodimer. Heterotetramer of two MnmE and two MnmG subunits. FAD serves as cofactor.

It localises to the cytoplasm. Functionally, NAD-binding protein involved in the addition of a carboxymethylaminomethyl (cmnm) group at the wobble position (U34) of certain tRNAs, forming tRNA-cmnm(5)s(2)U34. The chain is tRNA uridine 5-carboxymethylaminomethyl modification enzyme MnmG from Rhizobium meliloti (strain 1021) (Ensifer meliloti).